The following is a 217-amino-acid chain: Peptidyl-tRNA hydrolase (217 aa).

Position 14 (tyrosine 14) interacts with tRNA. Histidine 19 serves as the catalytic Proton acceptor. TRNA contacts are provided by tyrosine 64, asparagine 66, and asparagine 113. A disordered region spans residues 182-217; that stretch reads MNRINAPPPKPKREQKRSSDAPDSSSDTNTSNASDG. Over residues 202-217 the composition is skewed to low complexity; the sequence is APDSSSDTNTSNASDG.

This sequence belongs to the PTH family. Monomer.

The protein resides in the cytoplasm. It carries out the reaction an N-acyl-L-alpha-aminoacyl-tRNA + H2O = an N-acyl-L-amino acid + a tRNA + H(+). Its function is as follows. Hydrolyzes ribosome-free peptidyl-tRNAs (with 1 or more amino acids incorporated), which drop off the ribosome during protein synthesis, or as a result of ribosome stalling. In terms of biological role, catalyzes the release of premature peptidyl moieties from peptidyl-tRNA molecules trapped in stalled 50S ribosomal subunits, and thus maintains levels of free tRNAs and 50S ribosomes. This chain is Peptidyl-tRNA hydrolase, found in Roseiflexus sp. (strain RS-1).